We begin with the raw amino-acid sequence, 434 residues long: Attachment protein G3P (434 aa).

Positions 1–19 (MKRKIIAISLFLYIPLSNA) are cleaved as a signal peptide. The N1 stretch occupies residues 19 to 88 (ADNWESITKS…LTFSGIWPDS (70 aa)). Cysteine 63 and cysteine 98 are oxidised to a cystine. A G1 (Gly-rich linker) region spans residues 89 to 107 (QFRLVTGDTCVYNGSPSEK). The tract at residues 118–137 (EGDMQRSVPDEEPSEQTPEE) is disordered. Residues 127–137 (DEEPSEQTPEE) are compositionally biased toward acidic residues. Residues 132-200 (EQTPEEICEA…PTGYVPESGE (69 aa)) form an N2 region. 2 disulfides stabilise this stretch: cysteine 139/cysteine 167 and cysteine 177/cysteine 184. Disordered stretches follow at residues 191–260 (PTGY…TGKS) and 272–311 (DASP…SVSD). Residues 193-206 (GYVPESGESSSSPV) are compositionally biased toward low complexity. Residues 211–257 (TGGTGEGGSDTGGDTGGGDTGGGSTGGDTGGSTGGGSTGGGSTGGST) show a composition bias toward gly residues. The segment at 252–434 (STGGSTGKSL…ATSLLRKGEQ (183 aa)) is CT. The segment covering 293-302 (DNQKKADEQS) has biased composition (basic and acidic residues). Residues 408 to 429 (VLSWVMYCLTFWYVFQSATSLL) traverse the membrane as a helical segment.

Belongs to the inovirus G3P protein family. As to quaternary structure, interacts with G6P; this interaction is required for proper integration of G3P and G6P into the virion. Interacts with G8P. Interacts with the tip of the host pilus. Interacts (via N-terminus) with host TolA.

Its subcellular location is the virion. It is found in the host membrane. Functionally, plays essential roles both in the penetration of the viral genome into the bacterial host via pilus retraction and in the extrusion process. During the initial step of infection, G3P mediates adsorption of the phage to its primary receptor, the tip of host I-pilus. Attachment of the phage causes pilus retraction bringing the viral particle into close proximity of the host cell inner membrane. Subsequent interaction with the host entry receptor tolA induces penetration of the viral DNA into the host cytoplasm. In the extrusion process, G3P mediates the release of the membrane-anchored virion from the cell via its C-terminal domain. The chain is Attachment protein G3P (III) from Escherichia coli (Bacteriophage I2-2).